A 151-amino-acid polypeptide reads, in one-letter code: Ribosome maturation factor RimP (151 aa).

The protein belongs to the RimP family.

It localises to the cytoplasm. Functionally, required for maturation of 30S ribosomal subunits. In Shewanella putrefaciens (strain CN-32 / ATCC BAA-453), this protein is Ribosome maturation factor RimP.